The primary structure comprises 160 residues: Large ribosomal subunit protein uL22c (160 aa).

The protein belongs to the universal ribosomal protein uL22 family. Part of the 50S ribosomal subunit.

Its subcellular location is the plastid. It localises to the chloroplast. Its function is as follows. This protein binds specifically to 23S rRNA. Functionally, the globular domain of the protein is located near the polypeptide exit tunnel on the outside of the subunit, while an extended beta-hairpin is found that lines the wall of the exit tunnel in the center of the 70S ribosome. The chain is Large ribosomal subunit protein uL22c (rpl22) from Aethionema grandiflorum (Persian stone-cress).